The chain runs to 290 residues: Pirin (290 aa).

Positions 56, 58, 101, and 103 each coordinate Fe cation.

It belongs to the pirin family. May interact with NF1/CTF1. Interacts with BCL3. Identified in a complex comprised of PIR, BLC3, NFKB1 and target DNA. It depends on Fe cation as a cofactor. As to expression, weakly expressed in bone marrow.

The protein resides in the nucleus. It localises to the cytoplasm. It carries out the reaction quercetin + O2 = 2-(3,4-dihydroxybenzoyloxy)-4,6-dihydroxybenzoate + CO. It participates in flavonoid metabolism; quercetin degradation. Functionally, transcriptional coregulator of NF-kappa-B which facilitates binding of NF-kappa-B proteins to target kappa-B genes in a redox-state-dependent manner. May be required for efficient terminal myeloid maturation of hematopoietic cells. Has quercetin 2,3-dioxygenase activity (in vitro). This is Pirin (Pir) from Mus musculus (Mouse).